A 408-amino-acid polypeptide reads, in one-letter code: Putative glutamate--cysteine ligase 2 (408 aa).

This sequence belongs to the glutamate--cysteine ligase type 2 family. YbdK subfamily.

It carries out the reaction L-cysteine + L-glutamate + ATP = gamma-L-glutamyl-L-cysteine + ADP + phosphate + H(+). ATP-dependent carboxylate-amine ligase which exhibits weak glutamate--cysteine ligase activity. The polypeptide is Putative glutamate--cysteine ligase 2 (Bradyrhizobium sp. (strain ORS 278)).